We begin with the raw amino-acid sequence, 308 residues long: D-alanine--D-alanine ligase (308 aa).

The ATP-grasp domain maps to 103 to 302; that stretch reads KTVMATAGVP…FDELVQWMVE (200 aa). 130-184 provides a ligand contact to ATP; the sequence is MAPPYVIKPVADGSSVGVFMVTEAHEHPPQELFRDDWPHGEQLLVEKYVAGKELT. The Mg(2+) site is built by Asp-252, Glu-269, and Asn-271.

The protein belongs to the D-alanine--D-alanine ligase family. Mg(2+) is required as a cofactor. It depends on Mn(2+) as a cofactor.

The protein resides in the cytoplasm. The catalysed reaction is 2 D-alanine + ATP = D-alanyl-D-alanine + ADP + phosphate + H(+). It functions in the pathway cell wall biogenesis; peptidoglycan biosynthesis. Its function is as follows. Cell wall formation. This chain is D-alanine--D-alanine ligase, found in Rhodopseudomonas palustris (strain BisB18).